The chain runs to 274 residues: Diaminopimelate epimerase (274 aa).

Residues Asn-11 and Asn-76 each contribute to the substrate site. Residue Cys-85 is the Proton donor of the active site. Residues 86–87 (GN), Asn-157, Asn-189, and 207–208 (ER) contribute to the substrate site. Residue Cys-216 is the Proton acceptor of the active site. A substrate-binding site is contributed by 217–218 (GT).

The protein belongs to the diaminopimelate epimerase family. As to quaternary structure, homodimer.

The protein resides in the cytoplasm. It carries out the reaction (2S,6S)-2,6-diaminopimelate = meso-2,6-diaminopimelate. Its pathway is amino-acid biosynthesis; L-lysine biosynthesis via DAP pathway; DL-2,6-diaminopimelate from LL-2,6-diaminopimelate: step 1/1. In terms of biological role, catalyzes the stereoinversion of LL-2,6-diaminopimelate (L,L-DAP) to meso-diaminopimelate (meso-DAP), a precursor of L-lysine and an essential component of the bacterial peptidoglycan. The chain is Diaminopimelate epimerase from Thermobifida fusca (strain YX).